The primary structure comprises 491 residues: Aspartyl/glutamyl-tRNA(Asn/Gln) amidotransferase subunit B (491 aa).

Belongs to the GatB/GatE family. GatB subfamily. Heterotrimer of A, B and C subunits.

It carries out the reaction L-glutamyl-tRNA(Gln) + L-glutamine + ATP + H2O = L-glutaminyl-tRNA(Gln) + L-glutamate + ADP + phosphate + H(+). The catalysed reaction is L-aspartyl-tRNA(Asn) + L-glutamine + ATP + H2O = L-asparaginyl-tRNA(Asn) + L-glutamate + ADP + phosphate + 2 H(+). Functionally, allows the formation of correctly charged Asn-tRNA(Asn) or Gln-tRNA(Gln) through the transamidation of misacylated Asp-tRNA(Asn) or Glu-tRNA(Gln) in organisms which lack either or both of asparaginyl-tRNA or glutaminyl-tRNA synthetases. The reaction takes place in the presence of glutamine and ATP through an activated phospho-Asp-tRNA(Asn) or phospho-Glu-tRNA(Gln). In Trichormus variabilis (strain ATCC 29413 / PCC 7937) (Anabaena variabilis), this protein is Aspartyl/glutamyl-tRNA(Asn/Gln) amidotransferase subunit B.